Reading from the N-terminus, the 245-residue chain is MNKNIKYSQNFLTSEKVLNQIIKQLNLKETDTVYEIGTGKGHLTTKLAKISKQVTSIELDSHLFNLSSEKLKLNIRVTLIHQDILQFQFPNKQRYKIVGSIPYHLSTQIIKKVVFESHASDIYLIVEEGFYKRTLDIHRTLGLLLHTQVSIQQLLKLPAECFHPKPKVNSVLIKLTRHTTDVPDKYWKLYTYFVSKWVNREYRQLFTKNQFHQAMKHAKVNNLSTITYEQVLSIFNSYLLFNGRK.

S-adenosyl-L-methionine-binding residues include asparagine 10, leucine 12, glycine 37, glutamate 58, aspartate 83, and serine 100.

The protein belongs to the class I-like SAM-binding methyltransferase superfamily. rRNA adenine N(6)-methyltransferase family.

It catalyses the reaction adenosine(2085) in 23S rRNA + 2 S-adenosyl-L-methionine = N(6)-dimethyladenosine(2085) in 23S rRNA + 2 S-adenosyl-L-homocysteine + 2 H(+). In terms of biological role, this protein produces a dimethylation of the adenine residue at position 2085 in 23S rRNA, resulting in reduced affinity between ribosomes and macrolide-lincosamide-streptogramin B antibiotics. This Streptococcus pneumoniae protein is rRNA adenine N-6-methyltransferase (erm).